We begin with the raw amino-acid sequence, 290 residues long: Ribosomal RNA small subunit methyltransferase A (290 aa).

S-adenosyl-L-methionine-binding residues include Asn-27, Leu-29, Gly-54, Glu-75, Asp-100, and Asn-125.

The protein belongs to the class I-like SAM-binding methyltransferase superfamily. rRNA adenine N(6)-methyltransferase family. RsmA subfamily.

The protein resides in the cytoplasm. It carries out the reaction adenosine(1518)/adenosine(1519) in 16S rRNA + 4 S-adenosyl-L-methionine = N(6)-dimethyladenosine(1518)/N(6)-dimethyladenosine(1519) in 16S rRNA + 4 S-adenosyl-L-homocysteine + 4 H(+). Its function is as follows. Specifically dimethylates two adjacent adenosines (A1518 and A1519) in the loop of a conserved hairpin near the 3'-end of 16S rRNA in the 30S particle. May play a critical role in biogenesis of 30S subunits. The polypeptide is Ribosomal RNA small subunit methyltransferase A (Streptococcus agalactiae serotype Ia (strain ATCC 27591 / A909 / CDC SS700)).